We begin with the raw amino-acid sequence, 417 residues long: Cyanophycinase (417 aa).

Positions 1-23 are cleaved as a signal peptide; that stretch reads MIRSFIRSSALLLALLPVTGYSA. Active-site charge relay system residues include Ser169, Asp188, and His222.

Belongs to the peptidase S51 family.

The protein resides in the secreted. It carries out the reaction [L-4-(L-arginin-2-N-yl)aspartate](n) + H2O = [L-4-(L-arginin-2-N-yl)aspartate](n-1) + L-4-(L-arginin-2-N-yl)aspartate. Its activity is regulated as follows. Inhibited by serine protease inhibitors. Inhibited by N-Bromo-succinimide. Functionally, exopeptidase that catalyzes the hydrolytic cleavage of multi-L-arginyl-poly-L-aspartic acid (cyanophycin; a water-insoluble reserve polymer) into aspartate-arginine dipeptides. This chain is Cyanophycinase (cphE), found in Pseudomonas anguilliseptica.